A 146-amino-acid polypeptide reads, in one-letter code: Snaclec CTL-Eoc124 (146 aa).

Residues 1 to 23 (MGRFISVSFGLLVVFLSLSGTGA) form the signal peptide. 3 disulfides stabilise this stretch: cysteine 25-cysteine 36, cysteine 53-cysteine 142, and cysteine 119-cysteine 134. One can recognise a C-type lectin domain in the interval 32-143 (YQGHCYRVFN…CSRTNNVACK (112 aa)).

This sequence belongs to the snaclec family. As to quaternary structure, heterodimer; disulfide-linked. Expressed by the venom gland.

It localises to the secreted. Interferes with one step of hemostasis (modulation of platelet aggregation, or coagulation cascade, for example). This chain is Snaclec CTL-Eoc124, found in Echis ocellatus (Ocellated saw-scaled viper).